Consider the following 729-residue polypeptide: Triadin (729 aa).

Residues 1–28 (MTEITAEGNASTTTTVIDSKNGSVPKSP) are disordered. Residues 1 to 47 (MTEITAEGNASTTTTVIDSKNGSVPKSPGKVLKRTVTEDIVTTFSSP) lie on the Cytoplasmic side of the membrane. Residues 8–24 (GNASTTTTVIDSKNGSV) show a composition bias toward polar residues. A helical membrane pass occupies residues 48-68 (AAWLLVIALIITWSAVAIVMF). Residues 69 to 729 (DLVDYKNFSA…NSPGQKQQGQ (661 aa)) lie on the Lumenal side of the membrane. The N-linked (GlcNAc...) asparagine glycan is linked to N75. The segment covering 117–129 (EDEEDDDGDEDTD) has biased composition (acidic residues). Disordered regions lie at residues 117–265 (EDEE…EQKD), 281–682 (DLKP…PTKQ), and 705–729 (PFTP…QQGQ). Basic and acidic residues-rich tracts occupy residues 130–265 (KGEI…EQKD), 309–357 (LEEK…KASE), 371–433 (AKKD…KEEI), 444–509 (GKKE…EVKP), 516–531 (GKKE…KEAK), 538–562 (VQIH…EKVL), 580–598 (KKAE…DKPK), and 609–674 (ESGK…KEGT). N647 carries N-linked (GlcNAc...) asparagine glycosylation. The span at 715 to 729 (SSGQANSPGQKQQGQ) shows a compositional bias: polar residues.

As to quaternary structure, homooligomer of variable subunit number; disulfide-linked. Interacts with CASQ1 and RYR1 in skeletal muscle. Interacts with CASQ2. Phosphorylated by CaMK2. In terms of processing, N-glycosylated.

The protein resides in the cell membrane. It is found in the sarcoplasmic reticulum membrane. Its function is as follows. Contributes to the regulation of lumenal Ca2+ release via the sarcoplasmic reticulum calcium release channels RYR1 and RYR2, a key step in triggering skeletal and heart muscle contraction. Required for normal organization of the triad junction, where T-tubules and the sarcoplasmic reticulum terminal cisternae are in close contact. Required for normal skeletal muscle strength. Plays a role in excitation-contraction coupling in the heart and in regulating the rate of heart beats. This chain is Triadin (TRDN), found in Homo sapiens (Human).